The primary structure comprises 459 residues: Transcriptional coactivator YAP1 (459 aa).

Ser-21, Ser-69, Ser-87, and Ser-119 each carry phosphoserine; by LATS1 and LATS2. Disordered stretches follow at residues 51–88 (LPDS…AHSS) and 103–129 (SGMA…VPLP). 2 WW domains span residues 126–159 (VPLP…DPRK) and 186–219 (GPLP…DPRL). 2 disordered regions span residues 231 to 254 (TQSA…MGGN) and 307 to 364 (PTSM…SSYS). The tract at residues 247–459 (HGGVMGGNNQ…IDKESFLTWL (213 aa)) is transactivation domain. Composition is skewed to polar residues over residues 307 to 347 (PTSM…SGTY) and 355 to 364 (DSGLSMSSYS).

It belongs to the YAP1 family. Post-translationally, phosphorylated by lats1 and lats2; leading to cytoplasmic translocation and inactivation. As to expression, ubiquitously expressed throughout development.

Its subcellular location is the cytoplasm. It is found in the nucleus. The protein resides in the cell junction. It localises to the tight junction. The protein localises to the cell membrane. Functionally, transcriptional regulator which can act both as a coactivator and a corepressor and is the critical downstream regulatory target in the Hippo signaling pathway that plays a pivotal role in organ size control and tumor suppression by restricting proliferation and promoting apoptosis. Plays a key role in tissue tension and 3D tissue shape by regulating cortical actomyosin network formation. The chain is Transcriptional coactivator YAP1 from Oryzias latipes (Japanese rice fish).